A 406-amino-acid polypeptide reads, in one-letter code: Succinylornithine transaminase (406 aa).

An N6-(pyridoxal phosphate)lysine modification is found at K252.

This sequence belongs to the class-III pyridoxal-phosphate-dependent aminotransferase family. AstC subfamily. Pyridoxal 5'-phosphate serves as cofactor.

The enzyme catalyses N(2)-succinyl-L-ornithine + 2-oxoglutarate = N-succinyl-L-glutamate 5-semialdehyde + L-glutamate. The protein operates within amino-acid degradation; L-arginine degradation via AST pathway; L-glutamate and succinate from L-arginine: step 3/5. Functionally, catalyzes the transamination of N(2)-succinylornithine and alpha-ketoglutarate into N(2)-succinylglutamate semialdehyde and glutamate. Can also act as an acetylornithine aminotransferase. The protein is Succinylornithine transaminase of Escherichia coli O45:K1 (strain S88 / ExPEC).